The chain runs to 37 residues: Esculentin-2B (37 aa).

Cys-31 and Cys-37 form a disulfide bridge.

In terms of tissue distribution, expressed by the skin glands.

The protein localises to the secreted. In terms of biological role, antibacterial activity against Gram-positive bacterium S.aureus and Gram-negative bacterium E.coli. Has activity against C.albicans. The chain is Esculentin-2B from Lithobates berlandieri (Rio Grande leopard frog).